The following is a 153-amino-acid chain: NADPH-dependent 7-cyano-7-deazaguanine reductase (153 aa).

The disordered stretch occupies residues 1–26 (MVKIHDGASQLGANVAAPRSPEEATL). Cys51 (thioimide intermediate) is an active-site residue. The Proton donor role is filled by Asp58. Residues 73 to 75 (VES) and 92 to 93 (HE) contribute to the substrate site.

This sequence belongs to the GTP cyclohydrolase I family. QueF type 1 subfamily.

It localises to the cytoplasm. It catalyses the reaction 7-aminomethyl-7-carbaguanine + 2 NADP(+) = 7-cyano-7-deazaguanine + 2 NADPH + 3 H(+). Its pathway is tRNA modification; tRNA-queuosine biosynthesis. Functionally, catalyzes the NADPH-dependent reduction of 7-cyano-7-deazaguanine (preQ0) to 7-aminomethyl-7-deazaguanine (preQ1). The protein is NADPH-dependent 7-cyano-7-deazaguanine reductase of Methylocella silvestris (strain DSM 15510 / CIP 108128 / LMG 27833 / NCIMB 13906 / BL2).